A 158-amino-acid chain; its full sequence is NADH-quinone oxidoreductase subunit B 1 (158 aa).

Cys37, Cys38, Cys102, and Cys132 together coordinate [4Fe-4S] cluster.

This sequence belongs to the complex I 20 kDa subunit family. NDH-1 is composed of 14 different subunits. Subunits NuoB, C, D, E, F, and G constitute the peripheral sector of the complex. Requires [4Fe-4S] cluster as cofactor.

It localises to the cell inner membrane. It catalyses the reaction a quinone + NADH + 5 H(+)(in) = a quinol + NAD(+) + 4 H(+)(out). Functionally, NDH-1 shuttles electrons from NADH, via FMN and iron-sulfur (Fe-S) centers, to quinones in the respiratory chain. Couples the redox reaction to proton translocation (for every two electrons transferred, four hydrogen ions are translocated across the cytoplasmic membrane), and thus conserves the redox energy in a proton gradient. This is NADH-quinone oxidoreductase subunit B 1 from Chromobacterium violaceum (strain ATCC 12472 / DSM 30191 / JCM 1249 / CCUG 213 / NBRC 12614 / NCIMB 9131 / NCTC 9757 / MK).